The primary structure comprises 120 residues: MLRFTEEHEWLKLDGEIATVGITSHAAEQLGDLVFVELPKVGAVLTKGEAAAVVESVKAASDVYAPLDGEVTEINEAVVAAPETVNADPQGAGWLYRMRLKDPSAMEALMDEAAYAAFPK.

Residues 17–99 (IATVGITSHA…QGAGWLYRMR (83 aa)) enclose the Lipoyl-binding domain. The residue at position 58 (Lys58) is an N6-lipoyllysine.

Belongs to the GcvH family. In terms of assembly, the glycine cleavage system is composed of four proteins: P, T, L and H. (R)-lipoate serves as cofactor.

Functionally, the glycine cleavage system catalyzes the degradation of glycine. The H protein shuttles the methylamine group of glycine from the P protein to the T protein. The protein is Glycine cleavage system H protein of Methylobacterium nodulans (strain LMG 21967 / CNCM I-2342 / ORS 2060).